The following is a 498-amino-acid chain: Glycerol kinase (498 aa).

ADP is bound at residue Thr-11. Thr-11, Ser-12, and Ser-13 together coordinate ATP. Residue Thr-11 participates in sn-glycerol 3-phosphate binding. Arg-15 is an ADP binding site. 4 residues coordinate sn-glycerol 3-phosphate: Arg-81, Glu-82, Tyr-133, and Asp-242. Glycerol-binding residues include Arg-81, Glu-82, Tyr-133, Asp-242, and Gln-243. ADP contacts are provided by Thr-264 and Gly-307. Residues Thr-264, Gly-307, Gln-311, and Gly-408 each coordinate ATP. 2 residues coordinate ADP: Gly-408 and Asn-412.

The protein belongs to the FGGY kinase family.

It carries out the reaction glycerol + ATP = sn-glycerol 3-phosphate + ADP + H(+). The protein operates within polyol metabolism; glycerol degradation via glycerol kinase pathway; sn-glycerol 3-phosphate from glycerol: step 1/1. Its activity is regulated as follows. Inhibited by fructose 1,6-bisphosphate (FBP). Its function is as follows. Key enzyme in the regulation of glycerol uptake and metabolism. Catalyzes the phosphorylation of glycerol to yield sn-glycerol 3-phosphate. In Ralstonia nicotianae (strain ATCC BAA-1114 / GMI1000) (Ralstonia solanacearum), this protein is Glycerol kinase.